We begin with the raw amino-acid sequence, 827 residues long: Protein Jade-1 (827 aa).

Residues Met-1–His-35 form a disordered region. Positions Asn-16–Leu-30 are enriched in polar residues. The PHD-type 1 zinc finger occupies Asp-200–Gly-250. Residues Gln-252 to Val-286 form a C2HC pre-PHD-type zinc finger. Residues Leu-310–Gly-366 form a PHD-type 2 zinc finger. 2 disordered regions span residues Thr-622 to Leu-705 and Arg-769 to Ser-810. Composition is skewed to basic and acidic residues over residues Ser-646–Leu-661 and Lys-669–Arg-682. Residues Ala-692–Leu-705 show a composition bias toward polar residues.

Belongs to the JADE family. In terms of assembly, component of the HBO1 complex composed.

The protein resides in the nucleus. The protein localises to the chromosome. Its subcellular location is the cytoplasm. It is found in the cytoskeleton. It localises to the cilium basal body. Scaffold subunit of some HBO1 complexes, which have a histone H4 acetyltransferase activity. Plays a key role in HBO1 complex by directing KAT7/HBO1 specificity towards histone H4 acetylation (H4K5ac, H4K8ac and H4K12ac), regulating DNA replication initiation, regulating DNA replication initiation. In Xenopus laevis (African clawed frog), this protein is Protein Jade-1 (jade1).